A 272-amino-acid polypeptide reads, in one-letter code: Formamidopyrimidine-DNA glycosylase (272 aa).

Proline 2 serves as the catalytic Schiff-base intermediate with DNA. Catalysis depends on glutamate 3, which acts as the Proton donor. The Proton donor; for beta-elimination activity role is filled by lysine 58. 3 residues coordinate DNA: histidine 91, arginine 111, and arginine 153. The FPG-type zinc-finger motif lies at 238 to 272 (AVYGRANKACVICSKPLKEIRQAQRSTVFCINCQS). Arginine 262 (proton donor; for delta-elimination activity) is an active-site residue.

It belongs to the FPG family. Monomer. Requires Zn(2+) as cofactor.

It catalyses the reaction Hydrolysis of DNA containing ring-opened 7-methylguanine residues, releasing 2,6-diamino-4-hydroxy-5-(N-methyl)formamidopyrimidine.. The enzyme catalyses 2'-deoxyribonucleotide-(2'-deoxyribose 5'-phosphate)-2'-deoxyribonucleotide-DNA = a 3'-end 2'-deoxyribonucleotide-(2,3-dehydro-2,3-deoxyribose 5'-phosphate)-DNA + a 5'-end 5'-phospho-2'-deoxyribonucleoside-DNA + H(+). Its function is as follows. Involved in base excision repair of DNA damaged by oxidation or by mutagenic agents. Acts as a DNA glycosylase that recognizes and removes damaged bases. Has a preference for oxidized purines, such as 7,8-dihydro-8-oxoguanine (8-oxoG). Has AP (apurinic/apyrimidinic) lyase activity and introduces nicks in the DNA strand. Cleaves the DNA backbone by beta-delta elimination to generate a single-strand break at the site of the removed base with both 3'- and 5'-phosphates. This Marinomonas sp. (strain MWYL1) protein is Formamidopyrimidine-DNA glycosylase.